We begin with the raw amino-acid sequence, 242 residues long: Pyridoxine 5'-phosphate synthase (242 aa).

Residue Asn6 coordinates 3-amino-2-oxopropyl phosphate. 8 to 9 contributes to the 1-deoxy-D-xylulose 5-phosphate binding site; the sequence is DH. Residue Arg17 coordinates 3-amino-2-oxopropyl phosphate. The Proton acceptor role is filled by His42. 2 residues coordinate 1-deoxy-D-xylulose 5-phosphate: Arg44 and His49. Catalysis depends on Glu69, which acts as the Proton acceptor. 1-deoxy-D-xylulose 5-phosphate is bound at residue Thr99. His190 serves as the catalytic Proton donor. 3-amino-2-oxopropyl phosphate contacts are provided by residues Gly191 and 212–213; that span reads GH.

This sequence belongs to the PNP synthase family. Homooctamer; tetramer of dimers.

It is found in the cytoplasm. It catalyses the reaction 3-amino-2-oxopropyl phosphate + 1-deoxy-D-xylulose 5-phosphate = pyridoxine 5'-phosphate + phosphate + 2 H2O + H(+). Its pathway is cofactor biosynthesis; pyridoxine 5'-phosphate biosynthesis; pyridoxine 5'-phosphate from D-erythrose 4-phosphate: step 5/5. Its function is as follows. Catalyzes the complicated ring closure reaction between the two acyclic compounds 1-deoxy-D-xylulose-5-phosphate (DXP) and 3-amino-2-oxopropyl phosphate (1-amino-acetone-3-phosphate or AAP) to form pyridoxine 5'-phosphate (PNP) and inorganic phosphate. This is Pyridoxine 5'-phosphate synthase from Neisseria meningitidis serogroup A / serotype 4A (strain DSM 15465 / Z2491).